The primary structure comprises 497 residues: Probable cytosol aminopeptidase (497 aa).

The Mn(2+) site is built by lysine 265 and aspartate 270. Lysine 277 is a catalytic residue. The Mn(2+) site is built by aspartate 288, aspartate 347, and glutamate 349. Arginine 351 is a catalytic residue.

Belongs to the peptidase M17 family. Mn(2+) is required as a cofactor.

It localises to the cytoplasm. It catalyses the reaction Release of an N-terminal amino acid, Xaa-|-Yaa-, in which Xaa is preferably Leu, but may be other amino acids including Pro although not Arg or Lys, and Yaa may be Pro. Amino acid amides and methyl esters are also readily hydrolyzed, but rates on arylamides are exceedingly low.. The catalysed reaction is Release of an N-terminal amino acid, preferentially leucine, but not glutamic or aspartic acids.. In terms of biological role, presumably involved in the processing and regular turnover of intracellular proteins. Catalyzes the removal of unsubstituted N-terminal amino acids from various peptides. This is Probable cytosol aminopeptidase from Geobacillus sp. (strain WCH70).